The primary structure comprises 306 residues: MRVVFMGTPEFSVPILTAIIGHGYEVVAAYTQPPRPAGRRGLELTRSPVHEKAEQFGIPVFTPKSLKGAEEQDVFASLEADVAIVVAYGLLLPKAILDAPRLGCYNGHASLLPRWRGAAPIQRAIMAGDAETGMMIMKMDEGLDTGLVAMAEKVAITPDMTAGELHDRLSMIGADLMIRALGALERESLALQPQAEEGVTYAAKIDKAEARIDWSKPAKDVHNSIRGLSPFPGAWCEMEINGAVERVKLQRSTLGEGSGAPGTVLDDRLTIACGEGAVRLATLQHSGGKPLPAQEFLRGQRVTKVL.

110 to 113 (SLLP) contributes to the (6S)-5,6,7,8-tetrahydrofolate binding site.

Belongs to the Fmt family.

It carries out the reaction L-methionyl-tRNA(fMet) + (6R)-10-formyltetrahydrofolate = N-formyl-L-methionyl-tRNA(fMet) + (6S)-5,6,7,8-tetrahydrofolate + H(+). In terms of biological role, attaches a formyl group to the free amino group of methionyl-tRNA(fMet). The formyl group appears to play a dual role in the initiator identity of N-formylmethionyl-tRNA by promoting its recognition by IF2 and preventing the misappropriation of this tRNA by the elongation apparatus. The sequence is that of Methionyl-tRNA formyltransferase from Brucella suis (strain ATCC 23445 / NCTC 10510).